The primary structure comprises 327 residues: Zinc transport protein ZntB (327 aa).

The Cytoplasmic portion of the chain corresponds to 1 to 271 (METIYGSSLK…AMNRRTYTMS (271 aa)). Residues 272 to 292 (LLAMIFLPTTFLTGLFGVNLG) form a helical membrane-spanning segment. The Periplasmic segment spans residues 293 to 300 (GIPGNEYY). The chain crosses the membrane as a helical span at residues 301-321 (LGFAIFCLLLFGLVLFVAWWL). Residues 322-327 (KKSKWL) lie on the Cytoplasmic side of the membrane.

It belongs to the CorA metal ion transporter (MIT) (TC 1.A.35) family.

The protein localises to the cell inner membrane. The enzyme catalyses Zn(2+)(out) + H(+)(out) = Zn(2+)(in) + H(+)(in). Functionally, zinc transporter. Acts as a Zn(2+):proton symporter, which likely mediates zinc ion uptake. The protein is Zinc transport protein ZntB of Photorhabdus laumondii subsp. laumondii (strain DSM 15139 / CIP 105565 / TT01) (Photorhabdus luminescens subsp. laumondii).